The chain runs to 1354 residues: Rho-associated protein kinase 1 (1354 aa).

At S2 the chain carries N-acetylserine. Residues 76–338 (YEVVKVIGRG…VEEIKRHLFF (263 aa)) enclose the Protein kinase domain. ATP contacts are provided by residues 82 to 90 (IGRGAFGEV) and K105. D198 serves as the catalytic Proton acceptor. The AGC-kinase C-terminal domain occupies 341-409 (DQWAWETLRD…YSNRRYLSPA (69 aa)). Residues 368-727 (FDDLEEDKGD…KKLKEEREAR (360 aa)) are interaction with FHOD1. A coiled-coil region spans residues 422-692 (KSLQENLQKT…RLEQEVNEHK (271 aa)). The REM-1 domain maps to 479–556 (STVSQIEKEK…LEEANDLLRT (78 aa)). Residues 707–946 (EAKSVAMCEM…AVSRLEETNS (240 aa)) are SHROOM3 binding. Residues 949 to 1015 (TKDIELLRKE…LAEIMNRKDF (67 aa)) enclose the RhoBD domain. Residues 998–1010 (LKTQAVNKLAEIM) are RHOA binding. Residues 1011–1102 (NRKDFKIDKK…KLSDLSDSTS (92 aa)) are a coiled coil. The interval 1101-1120 (TSVASFPSADETDPNLPESR) is disordered. A phosphoserine mark is found at S1105 and S1108. The segment at 1115–1354 (NLPESRIEGW…VVKNTSGKTS (240 aa)) is auto-inhibitory. One can recognise a PH domain in the interval 1118–1317 (ESRIEGWLSV…WVTHLVKKIP (200 aa)). The segment at 1228-1283 (GHEFIPTLYHFPANCEACAKPLWHVFKPPPALECRRCHVKCHRDHLDKKEDLISPC) adopts a Phorbol-ester/DAG-type zinc-finger fold. S1328 carries the phosphoserine modification. The tract at residues 1333 to 1354 (STRSTANQSFRKVVKNTSGKTS) is disordered.

It belongs to the protein kinase superfamily. AGC Ser/Thr protein kinase family. As to quaternary structure, homodimer. Interacts with RHOA (activated by GTP), RHOB, RHOC, GEM, MYLC2B, RHOE, PPP1R12A, LIMK1, LIMK2, TSG101, CHORDC1, DAPK3, PFN1, PTEN and JIP3. Interacts with FHOD1 in a Src-dependent manner. Interacts with ITGB1BP1 (via N-terminus and PTB domain). Interacts with SHROOM3. Mg(2+) serves as cofactor. In terms of processing, autophosphorylated on serine and threonine residues. Post-translationally, cleaved by caspase-3 during apoptosis. This leads to constitutive activation of the kinase and membrane blebbing. In terms of tissue distribution, detected in corneal epithelium.

It localises to the cytoplasm. The protein resides in the cytoskeleton. It is found in the microtubule organizing center. The protein localises to the centrosome. Its subcellular location is the centriole. It localises to the golgi apparatus membrane. The protein resides in the cell projection. It is found in the bleb. The protein localises to the cell membrane. Its subcellular location is the lamellipodium. It localises to the ruffle. It catalyses the reaction L-seryl-[protein] + ATP = O-phospho-L-seryl-[protein] + ADP + H(+). The catalysed reaction is L-threonyl-[protein] + ATP = O-phospho-L-threonyl-[protein] + ADP + H(+). Activated by RHOA binding. Inhibited by Y-27632. Protein kinase which is a key regulator of the actin cytoskeleton and cell polarity. Involved in regulation of smooth muscle contraction, actin cytoskeleton organization, stress fiber and focal adhesion formation, neurite retraction, cell adhesion and motility via phosphorylation of DAPK3, GFAP, LIMK1, LIMK2, MYL9/MLC2, TPPP, PFN1 and PPP1R12A. Phosphorylates FHOD1 and acts synergistically with it to promote SRC-dependent non-apoptotic plasma membrane blebbing. Phosphorylates JIP3 and regulates the recruitment of JNK to JIP3 upon UVB-induced stress. Acts as a suppressor of inflammatory cell migration by regulating PTEN phosphorylation and stability. Acts as a negative regulator of VEGF-induced angiogenic endothelial cell activation. Required for centrosome positioning and centrosome-dependent exit from mitosis. Plays a role in terminal erythroid differentiation. Inhibits podocyte motility via regulation of actin cytoskeletal dynamics and phosphorylation of CFL1. Promotes keratinocyte terminal differentiation. Involved in osteoblast compaction through the fibronectin fibrillogenesis cell-mediated matrix assembly process, essential for osteoblast mineralization. May regulate closure of the eyelids and ventral body wall by inducing the assembly of actomyosin bundles. This Oryctolagus cuniculus (Rabbit) protein is Rho-associated protein kinase 1 (ROCK1).